We begin with the raw amino-acid sequence, 436 residues long: GTPase Der (436 aa).

2 consecutive EngA-type G domains span residues 4–167 (PVVA…PKDA) and 175–351 (IKFS…DNHE). Residues 10 to 17 (GRPNVGKS), 57 to 61 (DTGGI), 119 to 122 (NKVD), 181 to 188 (GRPNVGKS), 229 to 233 (DTAGI), and 294 to 297 (NKWD) each bind GTP. The region spanning 352-436 (QRISSAVLND…PIHIIERRRK (85 aa)) is the KH-like domain.

The protein belongs to the TRAFAC class TrmE-Era-EngA-EngB-Septin-like GTPase superfamily. EngA (Der) GTPase family. As to quaternary structure, associates with the 50S ribosomal subunit.

Its function is as follows. GTPase that plays an essential role in the late steps of ribosome biogenesis. The chain is GTPase Der from Ligilactobacillus salivarius (strain UCC118) (Lactobacillus salivarius).